The sequence spans 551 residues: MSNYAPFIKPYVEYNEHGWGPCEVPELDVPYQPFCKGDRLGKICDWTVSLPEKKFPSKYASTFGNSSQYAYFYEDDDSTFHLVDTTGSKAFKPYQRGRYRPNVRNNVRARGRTGRGSQAVGGPGGPAAGGSTANSTKYGKGRNTRNTQNVGRRFGRSAPTRLRESSVMVQSDWVSIEEIDFARLLKLALPNIKEGKDIATCGSLEYYDKLYDRVNLRNEKPLLKMDRVVHTVTTTDDPVIRRLSKTMGNVFATDEILATIMCCTRSNYSWDVVIEKLGTKVFLDKRDNDQFDLLTVNETSLEPPMDEEGSINSAHSLAMEATLINHNFSQQVLRIGDQEPRFKFEEPNPFEEQGVDLASMGYRYRQWDLGNEVVLIARCKHNGVIQGPNGEMQFLSIKALNEWDSKGSNSVEWRQKLDTQRGAVLASELRNNACKLARWTVEAVLAGSDQLKLGYVSRVNPRDHLRHVILGTQQFKPQEFATQINLNMDNAWGVLRCLIDIVMKQPDGKYLIMKDPNKSMIRLYDIPENAFDSDCNDDTESSETFVHSNDN.

The disordered stretch occupies residues 105 to 152 (NNVRARGRTGRGSQAVGGPGGPAAGGSTANSTKYGKGRNTRNTQNVGR). Gly residues predominate over residues 119-128 (AVGGPGGPAA). The tract at residues 290–304 (QFDLLTVNETSLEPP) is RNA gate.

It belongs to the eIF-3 subunit D family. As to quaternary structure, component of the eukaryotic translation initiation factor 3 (eIF-3) complex. The eIF-3 complex interacts with pix.

It localises to the cytoplasm. In terms of biological role, mRNA cap-binding component of the eukaryotic translation initiation factor 3 (eIF-3) complex, which is involved in protein synthesis of a specialized repertoire of mRNAs and, together with other initiation factors, stimulates binding of mRNA and methionyl-tRNAi to the 40S ribosome. The eIF-3 complex specifically targets and initiates translation of a subset of mRNAs involved in cell proliferation. In the eIF-3 complex, eif3d specifically recognizes and binds the 7-methylguanosine cap of a subset of mRNAs. This is Eukaryotic translation initiation factor 3 subunit D-2 from Drosophila erecta (Fruit fly).